The sequence spans 362 residues: MRDETPEQPAPLRFGYTTGSCATATSLAAARLLLGGRADDAVEIVLPKGQRVMMRLEFCRTTAAGAEAGTIKDAGDDPDVTHGALVFARVALSAAPGVRFHAGPGVGTVTRAGLTLPIGEPAINPVPRQMMTTHLDALAAEHGYTGGFDVTIGVEGGEALALKTMNPRLGIVGGLSILGTTGIVRPFSCAAYIASIHQGIDVARANGIAHIAACTGNASEDAMRAHYGLPDIALIEMGDFAGAVLKHLRRAPLARVSMCGGFGKLSKLAAGHLDLHSRHSSIDLPLLAQWAADAGASDALQAAMRAANTSQEALKLALADGVPLGDIVCAHALRVARDIVPASVAVEMFAIDRQGRFVGSAR.

This sequence belongs to the CbiD family.

The enzyme catalyses Co-precorrin-5B + S-adenosyl-L-methionine = Co-precorrin-6A + S-adenosyl-L-homocysteine. It functions in the pathway cofactor biosynthesis; adenosylcobalamin biosynthesis; cob(II)yrinate a,c-diamide from sirohydrochlorin (anaerobic route): step 6/10. Functionally, catalyzes the methylation of C-1 in cobalt-precorrin-5B to form cobalt-precorrin-6A. This chain is Cobalt-precorrin-5B C(1)-methyltransferase, found in Burkholderia vietnamiensis (strain G4 / LMG 22486) (Burkholderia cepacia (strain R1808)).